The chain runs to 151 residues: Copper transporter 2 (151 aa).

Helical transmembrane passes span 42–62 (GARG…AVLL) and 97–117 (VAYL…LAIV).

Belongs to the copper transporter (Ctr) (TC 1.A.56) family. SLC31A subfamily. In terms of assembly, self-interacts. Interacts with SWEET11 and COPT1.

It localises to the cell membrane. In terms of biological role, involved in the transport of copper, in cooperation with SWEET11 and COPT1. Contributes to the removal of copper (Cu) from xylem, and thus to the sensitivity toward bacterial pathogens such as X.oryzae pv. oryzae (Xoo). This chain is Copper transporter 2 (COPT2), found in Oryza sativa subsp. japonica (Rice).